A 60-amino-acid polypeptide reads, in one-letter code: Large ribosomal subunit protein uL30 (60 aa).

It belongs to the universal ribosomal protein uL30 family. In terms of assembly, part of the 50S ribosomal subunit.

The chain is Large ribosomal subunit protein uL30 from Shewanella baltica (strain OS223).